The primary structure comprises 68 residues: Large ribosomal subunit protein bL35 (68 aa).

This sequence belongs to the bacterial ribosomal protein bL35 family.

This chain is Large ribosomal subunit protein bL35, found in Rickettsia bellii (strain RML369-C).